A 518-amino-acid chain; its full sequence is U-box domain-containing protein 57 (518 aa).

A coiled-coil region spans residues 86-142 (EEVRKVHILEEEIVTLKHQADTYLVQKEKAVTAYDQLKHERDNAVQQVNELRDQSTH). The 251-residue stretch at 159 to 409 (FKNAREVGDT…RPDLLNEVWI (251 aa)) folds into the Protein kinase domain. Residues 434–508 (SVPAAFICPI…HGYLQQQQPN (75 aa)) form the U-box domain.

It carries out the reaction S-ubiquitinyl-[E2 ubiquitin-conjugating enzyme]-L-cysteine + [acceptor protein]-L-lysine = [E2 ubiquitin-conjugating enzyme]-L-cysteine + N(6)-ubiquitinyl-[acceptor protein]-L-lysine.. It participates in protein modification; protein ubiquitination. Functionally, possesses E3 ubiquitin-protein ligase in vitro. May be involved in cell death signaling. The chain is U-box domain-containing protein 57 (PUB57) from Oryza sativa subsp. japonica (Rice).